The primary structure comprises 207 residues: uncharacterized protein (207 aa).

Belongs to the flavoredoxin family. The cofactor is FMN.

This is an uncharacterized protein from Bacillus subtilis (strain 168).